A 68-amino-acid chain; its full sequence is MTQKIIKVEGMSCEHCRNAVESALAKLNGVSSAEVNLDENHVRVEYNDSKVTFENMKEAIEEQGYDVK.

The 67-residue stretch at 2-68 (TQKIIKVEGM…AIEEQGYDVK (67 aa)) folds into the HMA domain. C13 and C16 together coordinate Cu cation.

It localises to the cytoplasm. In terms of biological role, chaperone that serves for the intracellular sequestration and transport of Cu(+). Delivers Cu(+) to the copper-exporting P-type ATPase A (CopA). This chain is Copper chaperone CopZ (copZ), found in Staphylococcus epidermidis (strain ATCC 35984 / DSM 28319 / BCRC 17069 / CCUG 31568 / BM 3577 / RP62A).